Reading from the N-terminus, the 201-residue chain is CASP-like protein 2B2 (201 aa).

At Met-1–Arg-28 the chain is on the cytoplasmic side. A helical membrane pass occupies residues Val-29–Ile-49. Residues Ala-50–Lys-71 are Extracellular-facing. A helical membrane pass occupies residues Ala-72 to Val-92. Topologically, residues Arg-93–Pro-108 are cytoplasmic. Residues Leu-109 to Ala-129 form a helical membrane-spanning segment. Residues Ala-130–Ala-166 lie on the Extracellular side of the membrane. The helical transmembrane segment at Ser-167–Phe-187 threads the bilayer. The Cytoplasmic portion of the chain corresponds to Arg-188–Trp-201.

It belongs to the Casparian strip membrane proteins (CASP) family. As to quaternary structure, homodimer and heterodimers.

The protein resides in the cell membrane. This Arabidopsis thaliana (Mouse-ear cress) protein is CASP-like protein 2B2.